The primary structure comprises 156 residues: Snaclec A4 (156 aa).

The N-terminal stretch at 1 to 23 is a signal peptide; sequence MGRSISVSFGLLVVFLSLSGTGA. Cysteines 27 and 38 form a disulfide. The region spanning 34-155 is the C-type lectin domain; it reads HEGHCYKVFN…CGQPYRFTCE (122 aa). N-linked (GlcNAc...) asparagine glycosylation is present at Asn45. Cystine bridges form between Cys55-Cys154 and Cys129-Cys146.

It belongs to the snaclec family. In terms of assembly, heterodimer; disulfide-linked. As to expression, expressed by the venom gland.

Its subcellular location is the secreted. In terms of biological role, interferes with one step of hemostasis (modulation of platelet aggregation, or coagulation cascade, for example). This Macrovipera lebetinus (Levantine viper) protein is Snaclec A4.